A 234-amino-acid polypeptide reads, in one-letter code: MSGQLASYKQEFLKAAIEGGVLKFGSFELKSKRISPYFFNAGEFHTAHLAGAISSAFAKTIIDAQQNAGLDFDIIFGPAYKGIPLCSAITIKLGEISPQNLDTVSYSFDRKEAKDHGEGGNIVGASLKGKKILIVDDVITAGTAKREAIDKIRKEGGIVAGIVVALDRKEKLPAADGDDSKPGPSAIGELRKEYGIPIFAILTLDDIIAGMKSFASDDDIKRTEEYRQKYKATD.

Lysine 30 is a binding site for 5-phospho-alpha-D-ribose 1-diphosphate. 38–39 is an orotate binding site; the sequence is FF. Residues 80-81, arginine 110, lysine 111, lysine 114, histidine 116, and 136-144 each bind 5-phospho-alpha-D-ribose 1-diphosphate; these read YK and DDVITAGTA. Threonine 140 and arginine 168 together coordinate orotate.

Belongs to the purine/pyrimidine phosphoribosyltransferase family. PyrE subfamily. In terms of assembly, homodimer.

The enzyme catalyses orotidine 5'-phosphate + diphosphate = orotate + 5-phospho-alpha-D-ribose 1-diphosphate. Its pathway is pyrimidine metabolism; UMP biosynthesis via de novo pathway; UMP from orotate: step 1/2. Its function is as follows. Catalyzes the transfer of a ribosyl phosphate group from 5-phosphoribose 1-diphosphate to orotate, leading to the formation of orotidine monophosphate (OMP). In Metarhizium anisopliae (Entomophthora anisopliae), this protein is Orotate phosphoribosyltransferase (URA5).